The chain runs to 1339 residues: DNA-directed RNA polymerase subunit beta'' (1339 aa).

Residues C226, C299, C306, and C309 each coordinate Zn(2+).

It belongs to the RNA polymerase beta' chain family. RpoC2 subfamily. In plastids the minimal PEP RNA polymerase catalytic core is composed of four subunits: alpha, beta, beta', and beta''. When a (nuclear-encoded) sigma factor is associated with the core the holoenzyme is formed, which can initiate transcription. The cofactor is Zn(2+).

Its subcellular location is the plastid. It localises to the chloroplast. It carries out the reaction RNA(n) + a ribonucleoside 5'-triphosphate = RNA(n+1) + diphosphate. DNA-dependent RNA polymerase catalyzes the transcription of DNA into RNA using the four ribonucleoside triphosphates as substrates. The protein is DNA-directed RNA polymerase subunit beta'' of Cycas taitungensis (Prince sago).